Consider the following 123-residue polypeptide: Fluoride-specific ion channel FluC (123 aa).

Transmembrane regions (helical) follow at residues 6–26 (VALV…LSGV), 38–58 (LLVN…IFWG), 68–88 (FLGT…YETF), and 100–120 (LLNI…GFVL). Glycine 75 and serine 78 together coordinate Na(+).

This sequence belongs to the fluoride channel Fluc/FEX (TC 1.A.43) family.

Its subcellular location is the cell membrane. It catalyses the reaction fluoride(in) = fluoride(out). With respect to regulation, na(+) is not transported, but it plays an essential structural role and its presence is essential for fluoride channel function. Fluoride-specific ion channel. Important for reducing fluoride concentration in the cell, thus reducing its toxicity. This is Fluoride-specific ion channel FluC from Pyrococcus furiosus (strain ATCC 43587 / DSM 3638 / JCM 8422 / Vc1).